The following is a 277-amino-acid chain: Large ribosomal subunit protein uL2 (277 aa).

Disordered stretches follow at residues 38 to 58 and 219 to 277; these read HRKG…GGGH and TVRG…RKNK.

It belongs to the universal ribosomal protein uL2 family. Part of the 50S ribosomal subunit. Forms a bridge to the 30S subunit in the 70S ribosome.

Functionally, one of the primary rRNA binding proteins. Required for association of the 30S and 50S subunits to form the 70S ribosome, for tRNA binding and peptide bond formation. It has been suggested to have peptidyltransferase activity; this is somewhat controversial. Makes several contacts with the 16S rRNA in the 70S ribosome. This Bacillus pumilus (strain SAFR-032) protein is Large ribosomal subunit protein uL2.